The chain runs to 219 residues: Biofilm-associated metzincin protease inhibitor (219 aa).

A helical transmembrane segment spans residues 4–24 (TWIYAASAAAIGGALIGGWLL). Over residues 191 to 204 (DIAARSDPHGDHVD) the composition is skewed to basic and acidic residues. A disordered region spans residues 191 to 219 (DIAARSDPHGDHVDAPLAELPPMPPPAQG). Pro residues predominate over residues 209-219 (ELPPMPPPAQG).

It is found in the cell membrane. Its function is as follows. Inhibitor of the metalloendopeptidase Mep72. Forms a protein-protein complex with the protease, which is the product of its coregulated adjacent gene, and probably prevents premature protease activity until the protein has been secreted. The protein is Biofilm-associated metzincin protease inhibitor of Pseudomonas aeruginosa (strain ATCC 15692 / DSM 22644 / CIP 104116 / JCM 14847 / LMG 12228 / 1C / PRS 101 / PAO1).